Here is a 28-residue protein sequence, read N- to C-terminus: Aryl acylamidase (28 aa).

Homodimer.

It carries out the reaction an anilide + H2O = aniline + a carboxylate + H(+). This is Aryl acylamidase from Nocardia globerula.